The chain runs to 188 residues: Ribosome-recycling factor (188 aa).

The protein belongs to the RRF family.

The protein resides in the cytoplasm. Functionally, responsible for the release of ribosomes from messenger RNA at the termination of protein biosynthesis. May increase the efficiency of translation by recycling ribosomes from one round of translation to another. In Anaeromyxobacter dehalogenans (strain 2CP-1 / ATCC BAA-258), this protein is Ribosome-recycling factor.